The following is an 820-amino-acid chain: DNA mismatch repair protein MutS (820 aa).

618-625 (GPNMAGKS) serves as a coordination point for ATP.

The protein belongs to the DNA mismatch repair MutS family.

In terms of biological role, this protein is involved in the repair of mismatches in DNA. It is possible that it carries out the mismatch recognition step. This protein has a weak ATPase activity. The polypeptide is DNA mismatch repair protein MutS (Chlamydia trachomatis serovar A (strain ATCC VR-571B / DSM 19440 / HAR-13)).